The chain runs to 122 residues: Mth938 domain-containing protein (122 aa).

The interval 6 to 122 is MTH138-like domain; the sequence is IASLSWGQMK…RVGGVFHSTC (117 aa).

This sequence belongs to the AAMDC family.

The protein resides in the cytoplasm. Its function is as follows. May play a role in preadipocyte differentiation and adipogenesis. In Bos taurus (Bovine), this protein is Mth938 domain-containing protein (AAMDC).